Consider the following 168-residue polypeptide: MQLNWKESGLRWYWVVVVVFLADQLSKQWVLANFDLYESVKLLPFFNFTYVRNYGAAFSFLHDAGGWQRWLFTAVAVGFSVLLTIWLRKQPANMVRLNLAYTLVIGGALGNLIDRLQHGFVVDFLDFYWNTAHYPAFNIADAAIFIGAVLIIIDSFKASSSDDKAIKE.

3 helical membrane passes run 12 to 32 (WYWV…WVLA), 67 to 87 (WQRW…TIWL), and 93 to 113 (NMVR…GNLI). Residues aspartate 123 and aspartate 141 contribute to the active site. A helical membrane pass occupies residues 136–156 (AFNIADAAIFIGAVLIIIDSF).

It belongs to the peptidase A8 family.

The protein localises to the cell inner membrane. It catalyses the reaction Release of signal peptides from bacterial membrane prolipoproteins. Hydrolyzes -Xaa-Yaa-Zaa-|-(S,diacylglyceryl)Cys-, in which Xaa is hydrophobic (preferably Leu), and Yaa (Ala or Ser) and Zaa (Gly or Ala) have small, neutral side chains.. The protein operates within protein modification; lipoprotein biosynthesis (signal peptide cleavage). In terms of biological role, this protein specifically catalyzes the removal of signal peptides from prolipoproteins. The polypeptide is Lipoprotein signal peptidase (Shewanella amazonensis (strain ATCC BAA-1098 / SB2B)).